We begin with the raw amino-acid sequence, 113 residues long: Large ribosomal subunit protein bL19 (113 aa).

Belongs to the bacterial ribosomal protein bL19 family.

Functionally, this protein is located at the 30S-50S ribosomal subunit interface and may play a role in the structure and function of the aminoacyl-tRNA binding site. This Corynebacterium glutamicum (strain R) protein is Large ribosomal subunit protein bL19.